A 690-amino-acid chain; its full sequence is Glycine--tRNA ligase beta subunit (690 aa).

Belongs to the class-II aminoacyl-tRNA synthetase family. As to quaternary structure, tetramer of two alpha and two beta subunits.

The protein resides in the cytoplasm. The enzyme catalyses tRNA(Gly) + glycine + ATP = glycyl-tRNA(Gly) + AMP + diphosphate. The chain is Glycine--tRNA ligase beta subunit from Buchnera aphidicola subsp. Acyrthosiphon pisum (strain 5A).